Here is a 367-residue protein sequence, read N- to C-terminus: MTASRRTLMVMAGGTGGHVFPGLAVAHRMEAAGWRVVWLGNPAGMEATLVPKHGIPMEYVRFGGLRGKGLKTKLALPFNLLRACAQSLAALRRVRPDVVLGMGGYITFPAGVMTALSGRPLVLHEQNSIAGLANKVLAKLAKRVLVAFPGALPHAEWTGNPIRAELARTEPPKARYAARSGPLNVLVVGGSLGAAALNEVVPRALALLAPGERPRVVHQAGAKHIDALKANYEAAGFAAGDDVRLVPFIDDMAAAYAAADLVICRSGAMTVSEIAAVGVAALFVPFPYAVDDHQTTNAAFLADAGAAVLVQQRDLSAELLADWLRGQSRASLAAMAERSRSLAKPEATDEVARVCATVAGANLESLQ.

UDP-N-acetyl-alpha-D-glucosamine contacts are provided by residues 15-17, asparagine 127, arginine 163, serine 191, isoleucine 249, and glutamine 294; that span reads TGG.

It belongs to the glycosyltransferase 28 family. MurG subfamily.

It localises to the cell inner membrane. The enzyme catalyses di-trans,octa-cis-undecaprenyl diphospho-N-acetyl-alpha-D-muramoyl-L-alanyl-D-glutamyl-meso-2,6-diaminopimeloyl-D-alanyl-D-alanine + UDP-N-acetyl-alpha-D-glucosamine = di-trans,octa-cis-undecaprenyl diphospho-[N-acetyl-alpha-D-glucosaminyl-(1-&gt;4)]-N-acetyl-alpha-D-muramoyl-L-alanyl-D-glutamyl-meso-2,6-diaminopimeloyl-D-alanyl-D-alanine + UDP + H(+). It participates in cell wall biogenesis; peptidoglycan biosynthesis. Cell wall formation. Catalyzes the transfer of a GlcNAc subunit on undecaprenyl-pyrophosphoryl-MurNAc-pentapeptide (lipid intermediate I) to form undecaprenyl-pyrophosphoryl-MurNAc-(pentapeptide)GlcNAc (lipid intermediate II). This chain is UDP-N-acetylglucosamine--N-acetylmuramyl-(pentapeptide) pyrophosphoryl-undecaprenol N-acetylglucosamine transferase, found in Burkholderia multivorans (strain ATCC 17616 / 249).